The following is a 399-amino-acid chain: Argininosuccinate synthase (399 aa).

9 to 17 (AYSGGLDTS) serves as a coordination point for ATP. Tyrosine 85 serves as a coordination point for L-citrulline. Residue glycine 115 coordinates ATP. Threonine 117, asparagine 121, and aspartate 122 together coordinate L-aspartate. Residue asparagine 121 coordinates L-citrulline. 4 residues coordinate L-citrulline: arginine 125, serine 173, glutamate 258, and tyrosine 270.

It belongs to the argininosuccinate synthase family. Type 1 subfamily. As to quaternary structure, homotetramer.

The protein resides in the cytoplasm. The enzyme catalyses L-citrulline + L-aspartate + ATP = 2-(N(omega)-L-arginino)succinate + AMP + diphosphate + H(+). Its pathway is amino-acid biosynthesis; L-arginine biosynthesis; L-arginine from L-ornithine and carbamoyl phosphate: step 2/3. The protein is Argininosuccinate synthase of Streptococcus uberis (strain ATCC BAA-854 / 0140J).